Reading from the N-terminus, the 309-residue chain is Agglutinin (309 aa).

At M1 the chain carries N-acetylmethionine. Jacalin-type lectin domains follow at residues 4–148 (FLTV…YVKI) and 163–308 (PRGP…HMEY).

The protein belongs to the jacalin lectin family.

Functionally, D-mannose/D-glucose-binding lectin. Binds N-linked high-mannose-type glycans. Has a preference for smaller (Man(2)-Man(6)) high-mannose-type glycans to larger (Man(7)-Man(9)) ones. Recognizes both alpha1-6 extended and alpha1-3 extended monoantennary glycans. The addition of alpha1-2Man to the Man-alpha1-3Man-beta branch results in a significant loss of affinity, but beta1-2GlcNAc has some affinity. Has less affinity for biantennary glycans, and affinity is very weak for the biantennary complex-type N-glycans with bisecting GlcNAc. No affinity is observed for tri- and tetra-antennary glycans. Has mitogenic and hemagglutinating activities. The chain is Agglutinin from Castanea crenata (Japanese chestnut).